The chain runs to 879 residues: Alanine--tRNA ligase (879 aa).

Zn(2+) contacts are provided by histidine 566, histidine 570, cysteine 668, and histidine 672.

The protein belongs to the class-II aminoacyl-tRNA synthetase family. Zn(2+) serves as cofactor.

The protein resides in the cytoplasm. The catalysed reaction is tRNA(Ala) + L-alanine + ATP = L-alanyl-tRNA(Ala) + AMP + diphosphate. Its function is as follows. Catalyzes the attachment of alanine to tRNA(Ala) in a two-step reaction: alanine is first activated by ATP to form Ala-AMP and then transferred to the acceptor end of tRNA(Ala). Also edits incorrectly charged Ser-tRNA(Ala) and Gly-tRNA(Ala) via its editing domain. In Halalkalibacterium halodurans (strain ATCC BAA-125 / DSM 18197 / FERM 7344 / JCM 9153 / C-125) (Bacillus halodurans), this protein is Alanine--tRNA ligase.